Consider the following 690-residue polypeptide: Eukaryotic translation initiation factor 3 subunit B (690 aa).

Basic and acidic residues predominate over residues 1–11 (MAKKKSEEHSG). The disordered stretch occupies residues 1 to 36 (MAKKKSEEHSGADANDSDYQEEPNFEDPPGFVDNIS). The segment covering 15-25 (NDSDYQEEPNF) has biased composition (acidic residues). The RRM domain maps to 57 to 141 (SVVVVDNIPK…HTFAVNLFTD (85 aa)). 5 WD repeats span residues 207–246 (TRERFTDTFVKWSPLGTYVVTFHKPGVAIWGGSSFQKIQK), 293–331 (DGMSVLSMFRWSHDDKFVARMGENSIHIYETPSFFLLDL), 334–369 (IKIPGIRGFSWSPTDNVIAYWVEEQNQIPARVTLME), 442–484 (EIRE…KPSL), and 530–575 (PDHF…IKRT). Residues 595–645 (EEKQKEIKKNLKKYYAAFEQKDRLRLTRASKELLEKRSQLRETFMEYRNKR) adopt a coiled-coil conformation.

This sequence belongs to the eIF-3 subunit B family. Component of the eukaryotic translation initiation factor 3 (eIF-3) complex. The eIF-3 complex interacts with pix. Interacts with mxt.

Its subcellular location is the cytoplasm. RNA-binding component of the eukaryotic translation initiation factor 3 (eIF-3) complex, which is involved in protein synthesis of a specialized repertoire of mRNAs and, together with other initiation factors, stimulates binding of mRNA and methionyl-tRNAi to the 40S ribosome. The eIF-3 complex specifically targets and initiates translation of a subset of mRNAs involved in cell proliferation. The protein is Eukaryotic translation initiation factor 3 subunit B of Drosophila erecta (Fruit fly).